The primary structure comprises 731 residues: Vezatin (731 aa).

A run of 2 helical transmembrane segments spans residues 91–111 (LATPNIWDLSMLFAFISLLVM) and 114–134 (TWWIVSSWLVWGVILFVYLVI). The stretch at 382–414 (VRSLQLHLKALLNEVIILEDELEKLVCTKETQE) forms a coiled coil. 2 disordered regions span residues 570 to 671 (PVDP…DSLQ) and 710 to 731 (QTFGDEEEEQIIEENKNKIEEK). Over residues 577–586 (ISNSEPSMNS) the composition is skewed to polar residues. Residues 590–601 (KVSKNDTEEESS) show a composition bias toward basic and acidic residues. The span at 658–671 (GLTTAPPTPRDSLQ) shows a compositional bias: polar residues. The span at 712–721 (FGDEEEEQII) shows a compositional bias: acidic residues. Basic and acidic residues predominate over residues 722–731 (EENKNKIEEK).

Belongs to the vezatin family. Interacts with USH2A (via the cytoplasmic region); the interaction associates VEZT with the USH2 complex at the stereocilia base. Interacts with myosin MYO7A and the cadherin-catenins complex.

The protein resides in the cell membrane. The protein localises to the cell projection. It is found in the stereocilium membrane. It localises to the cell junction. Its subcellular location is the adherens junction. The protein resides in the nucleus. The protein localises to the cytoplasmic vesicle. It is found in the secretory vesicle. It localises to the acrosome. Plays a pivotal role in the establishment of adherens junctions and their maintenance in adult life. Required for morphogenesis of the preimplantation embryo, and for the implantation process. The polypeptide is Vezatin (VEZT) (Pongo abelii (Sumatran orangutan)).